Here is a 362-residue protein sequence, read N- to C-terminus: 3-dehydroquinate synthase (362 aa).

NAD(+) is bound by residues 70–75 (EGEQYK), 104–108 (GVIGD), 128–129 (TT), Lys-141, Lys-150, and 168–171 (TLTT). Residues Glu-183, His-246, and His-263 each coordinate Zn(2+).

The protein belongs to the sugar phosphate cyclases superfamily. Dehydroquinate synthase family. It depends on Co(2+) as a cofactor. Zn(2+) is required as a cofactor. The cofactor is NAD(+).

Its subcellular location is the cytoplasm. It carries out the reaction 7-phospho-2-dehydro-3-deoxy-D-arabino-heptonate = 3-dehydroquinate + phosphate. The protein operates within metabolic intermediate biosynthesis; chorismate biosynthesis; chorismate from D-erythrose 4-phosphate and phosphoenolpyruvate: step 2/7. Functionally, catalyzes the conversion of 3-deoxy-D-arabino-heptulosonate 7-phosphate (DAHP) to dehydroquinate (DHQ). This chain is 3-dehydroquinate synthase, found in Histophilus somni (strain 2336) (Haemophilus somnus).